Reading from the N-terminus, the 76-residue chain is Acyl carrier protein (76 aa).

The Carrier domain maps to 1 to 76 (MSIEERVKKI…SAIDYVQNNQ (76 aa)). S36 carries the post-translational modification O-(pantetheine 4'-phosphoryl)serine.

The protein belongs to the acyl carrier protein (ACP) family. In terms of processing, 4'-phosphopantetheine is transferred from CoA to a specific serine of apo-ACP by AcpS. This modification is essential for activity because fatty acids are bound in thioester linkage to the sulfhydryl of the prosthetic group.

Its subcellular location is the cytoplasm. The protein operates within lipid metabolism; fatty acid biosynthesis. Functionally, carrier of the growing fatty acid chain in fatty acid biosynthesis. The polypeptide is Acyl carrier protein (Histophilus somni (strain 129Pt) (Haemophilus somnus)).